A 452-amino-acid polypeptide reads, in one-letter code: MPDMLTLWTDIKALFEENNSKTAYATWIETAKPIALDGNKLTLELPSPLHRDYWTHQHLDQQLVEYAYQAAHEDIQPVLILENERQQQATLKAKTAPVAAGEPVEPTPTFMKETALNSRYTFDTFVIGKGNQMAHAAALVVSEEPGVMYNPLFFYGGVGLGKTHLMHAIGNKMLEDRPDTKVKYVTSEAFTNDFINAIQTRTQEQFRQEYRNVDLLLVDDIQFFANKEGTQEEFFHTFNALYDDGKQIVLTSDRLPNEIPKLQDRLVSRFAWGLSVDITPPDLETRIAILRNKADADQIDIPDDTLSYIAGQIDSNVRELEGALARVQAYSQLMHQPIATDLAAEALKSLNLANASDAVTIPVIQDRVAKYFDVSLKDLKGKKRKKAIVMPRQIAMYLSRELTEASLPRIGNEFGGKDHTTVIHAYDKITESLKTDPQLQKDIDSLKDDLRR.

A domain I, interacts with DnaA modulators region spans residues 1-72 (MPDMLTLWTD…LVEYAYQAAH (72 aa)). The segment at 72-114 (HEDIQPVLILENERQQQATLKAKTAPVAAGEPVEPTPTFMKET) is domain II. The segment at 115 to 331 (ALNSRYTFDT…GALARVQAYS (217 aa)) is domain III, AAA+ region. ATP is bound by residues glycine 159, glycine 161, lysine 162, and threonine 163. The tract at residues 332 to 452 (QLMHQPIATD…IDSLKDDLRR (121 aa)) is domain IV, binds dsDNA.

This sequence belongs to the DnaA family. Oligomerizes as a right-handed, spiral filament on DNA at oriC.

It is found in the cytoplasm. Functionally, plays an essential role in the initiation and regulation of chromosomal replication. ATP-DnaA binds to the origin of replication (oriC) to initiate formation of the DNA replication initiation complex once per cell cycle. Binds the DnaA box (a 9 base pair repeat at the origin) and separates the double-stranded (ds)DNA. Forms a right-handed helical filament on oriC DNA; dsDNA binds to the exterior of the filament while single-stranded (ss)DNA is stabiized in the filament's interior. The ATP-DnaA-oriC complex binds and stabilizes one strand of the AT-rich DNA unwinding element (DUE), permitting loading of DNA polymerase. After initiation quickly degrades to an ADP-DnaA complex that is not apt for DNA replication. Binds acidic phospholipids. This Levilactobacillus brevis (strain ATCC 367 / BCRC 12310 / CIP 105137 / JCM 1170 / LMG 11437 / NCIMB 947 / NCTC 947) (Lactobacillus brevis) protein is Chromosomal replication initiator protein DnaA.